The sequence spans 564 residues: Membrane protein insertase YidC (564 aa).

Residues 7-24 (VLWVVFSFSLLMLWDNYN) traverse the membrane as a helical segment. Residues 43–60 (KPAAATDDGKTAAAPTAD) show a composition bias toward low complexity. Positions 43-76 (KPAAATDDGKTAAAPTADVPTSSAHAANATGVPD) are disordered. 6 helical membrane-spanning segments follow: residues 293-313 (LATN…APGA), 341-361 (VKDY…MIQI), 364-384 (LLGN…LAFF), 438-458 (MPIV…LASV), 483-503 (IGSF…SMFI), and 524-544 (PIAF…YWVV).

This sequence belongs to the OXA1/ALB3/YidC family. Type 1 subfamily. As to quaternary structure, interacts with the Sec translocase complex via SecD. Specifically interacts with transmembrane segments of nascent integral membrane proteins during membrane integration.

Its subcellular location is the cell inner membrane. Its function is as follows. Required for the insertion and/or proper folding and/or complex formation of integral membrane proteins into the membrane. Involved in integration of membrane proteins that insert both dependently and independently of the Sec translocase complex, as well as at least some lipoproteins. Aids folding of multispanning membrane proteins. In Janthinobacterium sp. (strain Marseille) (Minibacterium massiliensis), this protein is Membrane protein insertase YidC.